The chain runs to 241 residues: Uridylate kinase (241 aa).

15–18 (KLSG) is a binding site for ATP. The segment at 23–28 (GAEGFG) is involved in allosteric activation by GTP. Gly57 contacts UMP. ATP is bound by residues Gly58 and Arg62. Residues Asp77 and 138 to 145 (TGNPFFTT) contribute to the UMP site. ATP is bound by residues Thr165, Phe171, and Asp174.

Belongs to the UMP kinase family. Homohexamer.

It is found in the cytoplasm. The catalysed reaction is UMP + ATP = UDP + ADP. It functions in the pathway pyrimidine metabolism; CTP biosynthesis via de novo pathway; UDP from UMP (UMPK route): step 1/1. With respect to regulation, allosterically activated by GTP. Inhibited by UTP. Its function is as follows. Catalyzes the reversible phosphorylation of UMP to UDP. In Sodalis glossinidius (strain morsitans), this protein is Uridylate kinase.